A 727-amino-acid chain; its full sequence is E3 ubiquitin-protein ligase LRSAM1 (727 aa).

6 LRR repeats span residues 30–51 (ADDI…AFAT), 56–77 (QKKV…SCSL), 82–103 (TIKV…MGQL), 105–126 (VLQV…IGNL), 128–150 (QLQT…GELR), and 151–172 (SLRT…LAHV). The interval 227 to 248 (GAENTQDSPDGPASRFSREEAE) is disordered. Serine 234 is subject to Phosphoserine. 2 coiled-coil regions span residues 241-382 (RFSR…NLRQ) and 469-547 (RQIR…QENY). In terms of domain architecture, SAM spans 569 to 632 (GMERRLVALL…LRRAQDLLAV (64 aa)). Phosphoserine is present on serine 604. 2 short sequence motifs (PTAP motif) span residues 653 to 656 (PTAP) and 665 to 668 (PSAP). Residues 679-714 (CVVCLEREAQMVFLTCGHVCCCQQCCQPLRTCPLCR) form an RING-type zinc finger.

Interacts with TSG101. Interacts with PHF23. Interacts with FUS. In terms of processing, ubiquitination promoted by PHF23 leads to proteasomal degradation. As to expression, widely expressed.

The protein localises to the cytoplasm. The catalysed reaction is S-ubiquitinyl-[E2 ubiquitin-conjugating enzyme]-L-cysteine + [acceptor protein]-L-lysine = [E2 ubiquitin-conjugating enzyme]-L-cysteine + N(6)-ubiquitinyl-[acceptor protein]-L-lysine.. The protein operates within protein modification; protein ubiquitination. Functionally, E3 ubiquitin-protein ligase that mediates monoubiquitination of TSG101 at multiple sites, leading to inactivate the ability of TSG101 to sort endocytic (EGF receptors) and exocytic (viral proteins) cargos. Bacterial recognition protein that defends the cytoplasm from invasive pathogens. Localizes to several intracellular bacterial pathogens and generates the bacteria-associated ubiquitin signal leading to autophagy-mediated intracellular bacteria degradation (xenophagy). This Mus musculus (Mouse) protein is E3 ubiquitin-protein ligase LRSAM1.